A 717-amino-acid chain; its full sequence is Mitochondrial potassium channel ATP-binding subunit (717 aa).

A mitochondrion-targeting transit peptide spans 1 to 25 (MLVHLFRFGIRGGPVPGWSLQSLRF). Helical transmembrane passes span 127–147 (LLAL…NVQI), 178–198 (VQLL…LVLL), 278–298 (LMLA…GSGL), and 365–385 (NIAF…LVAG). The ABC transmembrane type-1 domain occupies 132–419 (AAIVLALGAA…LSVLFGQVVR (288 aa)). The 238-residue stretch at 454 to 691 (ITFQNVTFSY…GGLYSELIRR (238 aa)) folds into the ABC transporter domain. Residue 489–496 (GQSGGGKT) participates in ATP binding. Positions 695–717 (DASLTSTPPAEKPEDPKSCQSKA) are disordered.

It belongs to the ABC transporter superfamily. ABCB family. Multidrug resistance exporter (TC 3.A.1.201) subfamily. The mitochondrial potassium channel (mitoK(ATP)) is composed of 4 subunits of CCDC51/MITOK and 4 subunits of ABCB8/MITOSUR. Interacts with PAAT. Interacts with NRP1; NRP1 regulates ABCB8/MITOSUR protein levels in mitochondria.

The protein localises to the mitochondrion inner membrane. Its activity is regulated as follows. Channel activity inhibited by ATP via ABCB8/MITOSUR subunit. ATP-binding subunit of the mitochondrial ATP-gated potassium channel (mitoK(ATP)). Together with pore-forming subunit CCDC51/MITOK of the mitoK(ATP) channel, mediates ATP-dependent potassium currents across the mitochondrial inner membrane. An increase in ATP intracellular levels closes the channel, inhibiting K(+) transport, whereas a decrease in ATP levels enhances K(+) uptake in the mitochondrial matrix. Plays a role in mitochondrial iron transport. Required for maintenance of normal cardiac function, possibly by influencing mitochondrial iron export and regulating the maturation of cytosolic iron sulfur cluster-containing enzymes. The protein is Mitochondrial potassium channel ATP-binding subunit of Mus musculus (Mouse).